The following is a 272-amino-acid chain: L-aspartate dehydrogenase 3 (272 aa).

NAD(+) is bound by residues alanine 126 and asparagine 194. Residue histidine 224 is part of the active site.

The protein belongs to the L-aspartate dehydrogenase family.

It carries out the reaction L-aspartate + NADP(+) + H2O = oxaloacetate + NH4(+) + NADPH + H(+). The enzyme catalyses L-aspartate + NAD(+) + H2O = oxaloacetate + NH4(+) + NADH + H(+). It participates in cofactor biosynthesis; NAD(+) biosynthesis; iminoaspartate from L-aspartate (dehydrogenase route): step 1/1. Its function is as follows. Specifically catalyzes the NAD or NADP-dependent dehydrogenation of L-aspartate to iminoaspartate. The polypeptide is L-aspartate dehydrogenase 3 (Bordetella bronchiseptica (strain ATCC BAA-588 / NCTC 13252 / RB50) (Alcaligenes bronchisepticus)).